The chain runs to 217 residues: MKYNKLVDHTLLAPQATVHDIDKLIDEAIKYDFKSVCIAPTWIKHAKEKLAKSDVLVCTVIGFPLGSNATSVKVYETKIAIAHGADEIDMVINIGRFKNKEYEFVLNEIKAIKEECGSKTLKVIVETALLTNEEIAKVTEIVMQSGAEFIKTSTGFSYRGASFEDVEIMKRVAQDKLLIKASGGIKVGDDAIKMVELGANRLGMSKSIQIMEDLEKK.

D89 (proton donor/acceptor) is an active-site residue. Residue K151 is the Schiff-base intermediate with acetaldehyde of the active site. The Proton donor/acceptor role is filled by K180.

It belongs to the DeoC/FbaB aldolase family. DeoC type 1 subfamily.

The protein localises to the cytoplasm. The enzyme catalyses 2-deoxy-D-ribose 5-phosphate = D-glyceraldehyde 3-phosphate + acetaldehyde. Its pathway is carbohydrate degradation; 2-deoxy-D-ribose 1-phosphate degradation; D-glyceraldehyde 3-phosphate and acetaldehyde from 2-deoxy-alpha-D-ribose 1-phosphate: step 2/2. In terms of biological role, catalyzes a reversible aldol reaction between acetaldehyde and D-glyceraldehyde 3-phosphate to generate 2-deoxy-D-ribose 5-phosphate. The polypeptide is Deoxyribose-phosphate aldolase (Metamycoplasma arthritidis (strain 158L3-1) (Mycoplasma arthritidis)).